Consider the following 493-residue polypeptide: Cytochrome c-552 (493 aa).

Residues 1–25 form the signal peptide; sequence MEKKLKSWQGWLLFCGAMAVVFVLG. His-116 is a heme c binding site. The heme site is built by Cys-144, Cys-147, and Lys-148. Residues Cys-182, Cys-185, His-186, Cys-224, Cys-227, and His-228 each coordinate heme c. Ca(2+) contacts are provided by Glu-230, Tyr-231, Lys-276, and Gln-278. A substrate-binding site is contributed by Tyr-231. Residue His-279 coordinates substrate. Residues His-290, Cys-297, Cys-300, His-301, His-315, Cys-328, Cys-331, His-332, and His-407 each coordinate heme c.

Belongs to the cytochrome c-552 family. Ca(2+) is required as a cofactor. Heme c serves as cofactor.

It is found in the periplasm. It carries out the reaction 6 Fe(III)-[cytochrome c] + NH4(+) + 2 H2O = 6 Fe(II)-[cytochrome c] + nitrite + 8 H(+). Its pathway is nitrogen metabolism; nitrate reduction (assimilation). Catalyzes the reduction of nitrite to ammonia, consuming six electrons in the process. The sequence is that of Cytochrome c-552 from Bacteroides fragilis (strain YCH46).